The chain runs to 292 residues: N-acetylneuraminate lyase (292 aa).

Residues Ser47 and Thr48 each coordinate aceneuramate. Tyr136 acts as the Proton donor in catalysis. Lys164 (schiff-base intermediate with substrate) is an active-site residue. The aceneuramate site is built by Thr166, Gly188, Asp190, Glu191, and Ser207.

The protein belongs to the DapA family. NanA subfamily. As to quaternary structure, homotetramer.

Its subcellular location is the cytoplasm. The enzyme catalyses aceneuramate = aldehydo-N-acetyl-D-mannosamine + pyruvate. Its pathway is amino-sugar metabolism; N-acetylneuraminate degradation; D-fructose 6-phosphate from N-acetylneuraminate: step 1/5. Its function is as follows. Catalyzes the reversible aldol cleavage of N-acetylneuraminic acid (sialic acid; Neu5Ac) to form pyruvate and N-acetylmannosamine (ManNAc) via a Schiff base intermediate. The chain is N-acetylneuraminate lyase from Actinobacillus pleuropneumoniae serotype 3 (strain JL03).